We begin with the raw amino-acid sequence, 170 residues long: Photosystem I assembly protein Ycf3 (170 aa).

3 TPR repeats span residues 35-68 (AFTH…EIDP), 72-105 (SYIL…NSSL), and 120-153 (GEQA…APSN).

The protein belongs to the Ycf3 family.

The protein resides in the plastid. Its subcellular location is the chloroplast thylakoid membrane. Its function is as follows. Essential for the assembly of the photosystem I (PSI) complex. May act as a chaperone-like factor to guide the assembly of the PSI subunits. This chain is Photosystem I assembly protein Ycf3, found in Anthoceros angustus (Hornwort).